A 135-amino-acid polypeptide reads, in one-letter code: Small ribosomal subunit protein eS6 (135 aa).

It belongs to the eukaryotic ribosomal protein eS6 family.

The protein is Small ribosomal subunit protein eS6 of Methanococcoides burtonii (strain DSM 6242 / NBRC 107633 / OCM 468 / ACE-M).